A 498-amino-acid chain; its full sequence is ATP synthase subunit beta, chloroplastic (498 aa).

172–179 (GGAGVGKT) serves as a coordination point for ATP.

Belongs to the ATPase alpha/beta chains family. F-type ATPases have 2 components, CF(1) - the catalytic core - and CF(0) - the membrane proton channel. CF(1) has five subunits: alpha(3), beta(3), gamma(1), delta(1), epsilon(1). CF(0) has four main subunits: a(1), b(1), b'(1) and c(9-12).

It is found in the plastid. It localises to the chloroplast thylakoid membrane. It carries out the reaction ATP + H2O + 4 H(+)(in) = ADP + phosphate + 5 H(+)(out). In terms of biological role, produces ATP from ADP in the presence of a proton gradient across the membrane. The catalytic sites are hosted primarily by the beta subunits. The sequence is that of ATP synthase subunit beta, chloroplastic from Solanum tuberosum (Potato).